Reading from the N-terminus, the 706-residue chain is B-cell lymphoma 6 protein (706 aa).

The BTB domain maps to 32–99; it reads TDVVIVVSRE…MYTSRLNLRE (68 aa). Residues 317 to 349 are disordered; that stretch reads EPPNAPLNRKGLVSPQSPQKSDCQPNSPTESCS. The segment covering 330–349 has biased composition (polar residues); that stretch reads SPQSPQKSDCQPNSPTESCS. Phosphoserine; by MAPK1 is present on residues Ser-333 and Ser-343. A Phosphoserine modification is found at Ser-361. Residues 376 to 379 form a required for interaction with NuRD complex and for transcriptional repressor activity region; sequence KKYK. Lys-379 is modified (N6-acetyllysine). The residue at position 404 (Ser-404) is a Phosphoserine. A disordered region spans residues 407–467; the sequence is AYTAPPACQP…PRSSSESHSP (61 aa). Residues 424–456 show a composition bias toward polar residues; sequence DLQSPTKLSASGEDSTIPQASRLNNIVNRSMTG. Low complexity predominate over residues 457-466; that stretch reads SPRSSSESHS. 6 consecutive C2H2-type zinc fingers follow at residues 518–541, 546–568, 574–596, 602–624, 630–652, and 658–681; these read FFCNECDCRFSEEASLKRHTLQTH, YKCDRCQASFRYKGNLASHKTVH, YRCNICGAQFNRPANLKTHTRIH, YKCETCGARFVQVAHLRAHVLIH, YPCEICGTRFRHLQTLKSHLRIH, and YHCEKCNLHFRHKSQLRLHLRQKH.

As to quaternary structure, homodimer. Interacts (via BTB domain) with the corepressors BCOR, NCOR1 and SMRT/NCOR2; the interactions are direct. Forms preferably ternary complexes with BCOR and SMRT/NCOR2 on target gene promoters but, on enhancer elements, interacts with SMRT/NCOR2 and HDAC3 to repress proximal gene expression. Interacts with histone deacetylases HDAC2, HDAC5 and HDAC9 (via the catalytic domain). Interacts with ZBTB7 and BCL6B. Interacts with SCF(FBXO11) complex; the interaction is independent of phosphorylation and promotes ubiquitination. Interacts (when phosphorylated) with PIN1; the interaction is required for BCL6 degradation upon genotoxic stress. Interacts with ZBTB17; inhibits ZBTB17 transcriptional activity. Interacts with CTBP1, autoinhibits its transcriptional expression. Interacts with NOTCH1 NCID and SIRT1; leads to a epigenetic repression of selective NOTCH1-target genes. Interacts (nor via BTB domain neither acetylated) with the NuRD complex components CHD4, HDAC1, MBD3 and MTA3; the interaction with MTA3 inhibits BCL6 acetylation and is required for BCL6 transpriptional repression. In terms of processing, phosphorylated by MAPK1 in response to antigen receptor activation at Ser-333 and Ser-343. Phosphorylated by ATM in response to genotoxic stress. Phosphorylation induces its degradation by ubiquitin/proteasome pathway. Polyubiquitinated. Polyubiquitinated by SCF(FBXO11), leading to its degradation by the proteasome. Ubiquitinated by the SCF(FBXL17) complex, leading to its degradation by the proteasome: ubiquitination by the SCF(FBXL17) complex takes place when aberrant BTB domain dimers are formed. Post-translationally, acetylated at Lys-379 by EP300 which inhibits the interaction with NuRD complex and the transcriptional repressor function. Deacetylated by HDAC- and SIR2-dependent pathways. As to expression, expressed in germinal center T- and B-cells and in primary immature dendritic cells.

The protein resides in the nucleus. Its function is as follows. Transcriptional repressor mainly required for germinal center (GC) formation and antibody affinity maturation which has different mechanisms of action specific to the lineage and biological functions. Forms complexes with different corepressors and histone deacetylases to repress the transcriptional expression of different subsets of target genes. Represses its target genes by binding directly to the DNA sequence 5'-TTCCTAGAA-3' (BCL6-binding site) or indirectly by repressing the transcriptional activity of transcription factors. In GC B-cells, represses genes that function in differentiation, inflammation, apoptosis and cell cycle control, also autoregulates its transcriptional expression and up-regulates, indirectly, the expression of some genes important for GC reactions, such as AICDA, through the repression of microRNAs expression, like miR155. An important function is to allow GC B-cells to proliferate very rapidly in response to T-cell dependent antigens and tolerate the physiological DNA breaks required for immunglobulin class switch recombination and somatic hypermutation without inducing a p53/TP53-dependent apoptotic response. In follicular helper CD4(+) T-cells (T(FH) cells), promotes the expression of T(FH)-related genes but inhibits the differentiation of T(H)1, T(H)2 and T(H)17 cells. Also required for the establishment and maintenance of immunological memory for both T- and B-cells. Suppresses macrophage proliferation through competition with STAT5 for STAT-binding motifs binding on certain target genes, such as CCL2 and CCND2. In response to genotoxic stress, controls cell cycle arrest in GC B-cells in both p53/TP53-dependedent and -independent manners. Besides, also controls neurogenesis through the alteration of the composition of NOTCH-dependent transcriptional complexes at selective NOTCH targets, such as HES5, including the recruitment of the deacetylase SIRT1 and resulting in an epigenetic silencing leading to neuronal differentiation. This is B-cell lymphoma 6 protein (BCL6) from Homo sapiens (Human).